The following is a 106-amino-acid chain: PAT complex subunit Asterix (106 aa).

A compositionally biased stretch (polar residues) spans 1 to 10; that stretch reads MSANSMSDPR. Residues 1-29 are disordered; sequence MSANSMSDPRSPNKVLRYKPPPSECNPAL. Ser-2 bears the N-acetylserine mark. At 2–32 the chain is on the cytoplasmic side; sequence SANSMSDPRSPNKVLRYKPPPSECNPALDDP. The chain crosses the membrane as a helical span at residues 33–51; sequence TPDYMNLLGMIFSMCGLML. Lys-52 is a topological domain (lumenal). Residues 53 to 70 form a helical membrane-spanning segment; the sequence is LKWCAWVAVYCSFISFAN. The Cytoplasmic segment spans residues 71-74; it reads SRSS. The chain crosses the membrane as a helical span at residues 75–95; it reads EDTKQMMSSFMLSISAVVMSY. Residues 96 to 106 are Lumenal-facing; the sequence is LQNPQPMTPPW.

It belongs to the Asterix family. Component of the PAT complex, composed of WDR83OS/Asterix and CCDC47. The PAT complex is part of the multi-pass translocon (MPT) complex, composed of three subcomplexes, the GEL complex (composed of RAB5IF/OPTI and TMCO1), the BOS complex (composed of NCLN/Nicalin, NOMO1 and TMEM147) and the PAT complex (composed of WDR83OS/Asterix and CCDC47). The MPT complex associates with the SEC61 complex.

It localises to the endoplasmic reticulum membrane. Its function is as follows. Component of the multi-pass translocon (MPT) complex that mediates insertion of multi-pass membrane proteins into the lipid bilayer of membranes. The MPT complex takes over after the SEC61 complex: following membrane insertion of the first few transmembrane segments of proteins by the SEC61 complex, the MPT complex occludes the lateral gate of the SEC61 complex to promote insertion of subsequent transmembrane regions. Within the MPT complex, the PAT subcomplex sequesters any highly polar regions in the transmembrane domains away from the non-polar membrane environment until they can be buried in the interior of the fully assembled protein. Within the PAT subcomplex, WDR83OS/Asterix binds to and redirects the substrate to a location behind the SEC61 complex. This chain is PAT complex subunit Asterix (WDR83OS), found in Sus scrofa (Pig).